A 314-amino-acid polypeptide reads, in one-letter code: Olfactory receptor 5P67 (314 aa).

Residues 1–28 are Extracellular-facing; it reads MAFLEDGNHTAVTEFILLGLTDDPVLRV. A glycan (N-linked (GlcNAc...) asparagine) is linked at N8. The helical transmembrane segment at 29 to 49 threads the bilayer; the sequence is ILFTIILCIYLVTVSGNLSTI. The Cytoplasmic portion of the chain corresponds to 50–57; the sequence is LLIRVSSQ. A helical membrane pass occupies residues 58–78; it reads LHHPMYFFLSHVGSVDIGYSS. At 79 to 102 the chain is on the extracellular side; that stretch reads SVTPNMLVNFLVEKHTIAYLGCGI. A disulfide bond links C100 and C192. Residues 103 to 123 traverse the membrane as a helical segment; the sequence is QLSSAAFFGTAECFLLATMAY. Over 124–136 the chain is Cytoplasmic; that stretch reads DRFVAICNPLLYS. The helical transmembrane segment at 137-157 threads the bilayer; the sequence is TKMSTQTCIQLVVGSYTGGIL. The Extracellular portion of the chain corresponds to 158–199; the sequence is NASFAIISFFSFLFCGPNRINHFYCDFAPLVELSCSDINVSV. A helical transmembrane segment spans residues 200 to 220; the sequence is VITTIFSASVTIITVFVIAIS. Topologically, residues 221–240 are cytoplasmic; the sequence is YTYILITILKMRSTEGRHKA. The chain crosses the membrane as a helical span at residues 241 to 261; it reads FSTCTSYLTAVTLFYGTVTFI. The Extracellular segment spans residues 262-274; that stretch reads YVVPKSNYSTDQN. A glycan (N-linked (GlcNAc...) asparagine) is linked at N268. A helical membrane pass occupies residues 275–295; the sequence is KVASVFYIVVIPMLNPLIYSL. Residues 296-314 lie on the Cytoplasmic side of the membrane; the sequence is RNNDIKGALKRQLGKKTFS.

This sequence belongs to the G-protein coupled receptor 1 family.

Its subcellular location is the cell membrane. In terms of biological role, potential odorant receptor. This chain is Olfactory receptor 5P67, found in Mus musculus (Mouse).